A 441-amino-acid chain; its full sequence is Mitochondrial distribution and morphology protein 12 (441 aa).

The SMP-LTD domain occupies 1 to 441; that stretch reads MSIDIDWERA…VYPSFWTFLV (441 aa). Positions 180–289 are disordered; sequence TPLRAVTRGN…SGTPPRRMRE (110 aa). Composition is skewed to polar residues over residues 226 to 245 and 253 to 263; these read SRPS…SVST and SSQTVLANNPG.

It belongs to the MDM12 family. As to quaternary structure, component of the ER-mitochondria encounter structure (ERMES) or MDM complex, composed of MMM1, MDM10, MDM12 and MDM34. An MMM1 homodimer associates with one molecule of MDM12 on each side in a pairwise head-to-tail manner, and the SMP-LTD domains of MMM1 and MDM12 generate a continuous hydrophobic tunnel for phospholipid trafficking.

It localises to the mitochondrion outer membrane. It is found in the endoplasmic reticulum membrane. In terms of biological role, component of the ERMES/MDM complex, which serves as a molecular tether to connect the endoplasmic reticulum (ER) and mitochondria. Components of this complex are involved in the control of mitochondrial shape and protein biogenesis, and function in nonvesicular lipid trafficking between the ER and mitochondria. MDM12 is required for the interaction of the ER-resident membrane protein MMM1 and the outer mitochondrial membrane-resident beta-barrel protein MDM10. The MDM12-MMM1 subcomplex functions in the major beta-barrel assembly pathway that is responsible for biogenesis of all mitochondrial outer membrane beta-barrel proteins, and acts in a late step after the SAM complex. The MDM10-MDM12-MMM1 subcomplex further acts in the TOM40-specific pathway after the action of the MDM12-MMM1 complex. Essential for establishing and maintaining the structure of mitochondria and maintenance of mtDNA nucleoids. This is Mitochondrial distribution and morphology protein 12 from Paracoccidioides brasiliensis (strain Pb18).